A 921-amino-acid chain; its full sequence is Valine--tRNA ligase (921 aa).

The 'HIGH' region motif lies at 40 to 50; sequence PNVTGSLHMGH. A 'KMSKS' region motif is present at residues 522–526; that stretch reads KMSKS. An ATP-binding site is contributed by lysine 525. Positions 849 to 921 form a coiled coil; it reads MADLIDKEAE…LQHKNRIESL (73 aa).

It belongs to the class-I aminoacyl-tRNA synthetase family. ValS type 1 subfamily. In terms of assembly, monomer.

Its subcellular location is the cytoplasm. It carries out the reaction tRNA(Val) + L-valine + ATP = L-valyl-tRNA(Val) + AMP + diphosphate. Functionally, catalyzes the attachment of valine to tRNA(Val). As ValRS can inadvertently accommodate and process structurally similar amino acids such as threonine, to avoid such errors, it has a 'posttransfer' editing activity that hydrolyzes mischarged Thr-tRNA(Val) in a tRNA-dependent manner. In Legionella pneumophila (strain Paris), this protein is Valine--tRNA ligase.